The chain runs to 364 residues: WAT1-related protein At3g30340 (364 aa).

Transmembrane regions (helical) follow at residues 9 to 29 (WKAV…NVMF), 41 to 61 (VATT…AIFL), 76 to 96 (SLFF…LIGL), 102 to 122 (TFSL…ALVF), 138 to 158 (LLGT…KGTA), 183 to 203 (WAMG…WFIV), 215 to 235 (YTST…LSLI), 251 to 271 (VLAL…GMSW), 277 to 297 (GAVF…IFSF), and 304 to 324 (IYCG…ILLW). 2 EamA domains span residues 26–152 (NVMF…LVLT) and 195–323 (IIWS…YILL).

The protein belongs to the drug/metabolite transporter (DMT) superfamily. Plant drug/metabolite exporter (P-DME) (TC 2.A.7.4) family.

It localises to the membrane. This Arabidopsis thaliana (Mouse-ear cress) protein is WAT1-related protein At3g30340.